A 602-amino-acid polypeptide reads, in one-letter code: Elongation factor 4 (602 aa).

The region spanning 7–189 is the tr-type G domain; the sequence is KYIRNFSIVA…AIVNKVPAPE (183 aa). Residues 19–24 and 136–139 contribute to the GTP site; these read DHGKST and NKID.

The protein belongs to the TRAFAC class translation factor GTPase superfamily. Classic translation factor GTPase family. LepA subfamily.

Its subcellular location is the cell membrane. It catalyses the reaction GTP + H2O = GDP + phosphate + H(+). Required for accurate and efficient protein synthesis under certain stress conditions. May act as a fidelity factor of the translation reaction, by catalyzing a one-codon backward translocation of tRNAs on improperly translocated ribosomes. Back-translocation proceeds from a post-translocation (POST) complex to a pre-translocation (PRE) complex, thus giving elongation factor G a second chance to translocate the tRNAs correctly. Binds to ribosomes in a GTP-dependent manner. The polypeptide is Elongation factor 4 (Clostridium botulinum (strain Okra / Type B1)).